Consider the following 438-residue polypeptide: Xylose isomerase (438 aa).

Residues His100 and Asp103 contribute to the active site. Mg(2+)-binding residues include Glu231, Glu267, His270, Asp295, Asp306, Asp308, and Asp338.

It belongs to the xylose isomerase family. Homotetramer. The cofactor is Mg(2+).

Its subcellular location is the cytoplasm. The catalysed reaction is alpha-D-xylose = alpha-D-xylulofuranose. The protein is Xylose isomerase of Pseudomonas syringae pv. syringae (strain B728a).